Consider the following 106-residue polypeptide: Small ribosomal subunit protein uS10 (106 aa).

The protein belongs to the universal ribosomal protein uS10 family. Part of the 30S ribosomal subunit.

Functionally, involved in the binding of tRNA to the ribosomes. The sequence is that of Small ribosomal subunit protein uS10 from Pyrobaculum islandicum (strain DSM 4184 / JCM 9189 / GEO3).